Reading from the N-terminus, the 344-residue chain is Histone-lysine N-methyltransferase, H3 lysine-9 specific KMT1 (344 aa).

Residues 79–174 (SGCSCAKDSE…DCPNRVVERG (96 aa)) enclose the Pre-SET domain. 10 residues coordinate Zn(2+): Cys-81, Cys-83, Cys-89, Cys-94, Cys-96, Cys-156, Cys-160, Cys-162, Cys-166, and Cys-272. Residues 177–312 (IPLEIFRTPD…EGEELTFDYV (136 aa)) form the SET domain. Residue Tyr-311 coordinates S-adenosyl-L-methionine. The 17-residue stretch at 328–344 (HMTRCLCGSKKCRKFLW) folds into the Post-SET domain. Positions 332, 334, and 339 each coordinate Zn(2+).

Belongs to the class V-like SAM-binding methyltransferase superfamily.

The protein localises to the chromosome. The catalysed reaction is L-lysyl(9)-[histone H3] + 3 S-adenosyl-L-methionine = N(6),N(6),N(6)-trimethyl-L-lysyl(9)-[histone H3] + 3 S-adenosyl-L-homocysteine + 3 H(+). Its function is as follows. Histone methyltransferase that specifically trimethylates histone H3 to form H3K9me3. H3K9me3 marks chromatin regions for DNA methylation. Plays a key role in the regulation of the biosynthesis of the gamma-pyrones fusapyrone (FPY) and deoxyfusapyrone (dFPY). The polypeptide is Histone-lysine N-methyltransferase, H3 lysine-9 specific KMT1 (Fusarium mangiferae (Mango malformation disease fungus)).